Here is a 322-residue protein sequence, read N- to C-terminus: uncharacterized protein (322 aa).

Residues 1–32 (MRDGIGKRAASALFLCGVLVMLAVSSAIVSSA) form the signal peptide.

This is an uncharacterized protein from Bacillus subtilis (strain 168).